A 248-amino-acid polypeptide reads, in one-letter code: Probable transcriptional regulatory protein P9303_05381 (248 aa).

It belongs to the TACO1 family.

The protein localises to the cytoplasm. In Prochlorococcus marinus (strain MIT 9303), this protein is Probable transcriptional regulatory protein P9303_05381.